Consider the following 800-residue polypeptide: Phenylalanine--tRNA ligase beta subunit (800 aa).

The tRNA-binding domain maps to 39–154; sequence TKEIKNLVVG…TEVKPGTDAL (116 aa). The B5 domain occupies 408 to 483; that stretch reads CFVTPIDISV…RIYGYDKIPS (76 aa). The Mg(2+) site is built by D461, D467, E470, and E471. One can recognise an FDX-ACB domain in the interval 708 to 800; that stretch reads PRFPGVSRDI…ALKSEGATIR (93 aa).

The protein belongs to the phenylalanyl-tRNA synthetase beta subunit family. Type 1 subfamily. In terms of assembly, tetramer of two alpha and two beta subunits. It depends on Mg(2+) as a cofactor.

The protein localises to the cytoplasm. It carries out the reaction tRNA(Phe) + L-phenylalanine + ATP = L-phenylalanyl-tRNA(Phe) + AMP + diphosphate + H(+). This is Phenylalanine--tRNA ligase beta subunit from Staphylococcus saprophyticus subsp. saprophyticus (strain ATCC 15305 / DSM 20229 / NCIMB 8711 / NCTC 7292 / S-41).